The sequence spans 148 residues: Deoxyuridine 5'-triphosphate nucleotidohydrolase (148 aa).

Substrate contacts are provided by residues 68-70, Asn81, 85-87, and Lys95; these read RSG and TID.

The protein belongs to the dUTPase family. It depends on Mg(2+) as a cofactor.

The catalysed reaction is dUTP + H2O = dUMP + diphosphate + H(+). It participates in pyrimidine metabolism; dUMP biosynthesis; dUMP from dCTP (dUTP route): step 2/2. Its function is as follows. This enzyme is involved in nucleotide metabolism: it produces dUMP, the immediate precursor of thymidine nucleotides and it decreases the intracellular concentration of dUTP so that uracil cannot be incorporated into DNA. The sequence is that of Deoxyuridine 5'-triphosphate nucleotidohydrolase from Rickettsia peacockii (strain Rustic).